The chain runs to 409 residues: Adenosine deaminase (409 aa).

Histidine 65, histidine 67, histidine 207, and aspartate 314 together coordinate Zn(2+).

Belongs to the metallo-dependent hydrolases superfamily. Requires Zn(2+) as cofactor.

It catalyses the reaction adenosine + H2O + H(+) = inosine + NH4(+). Catalyzes the deamination of adenosine into inosine. Is also able to deaminate adenine, but with considerably less efficiency. Is not active toward 6-chloroadenine. This is Adenosine deaminase from Helicobacter pylori (strain ATCC 700392 / 26695) (Campylobacter pylori).